A 149-amino-acid polypeptide reads, in one-letter code: Large ribosomal subunit protein bL9 (149 aa).

This sequence belongs to the bacterial ribosomal protein bL9 family.

Binds to the 23S rRNA. This Tolumonas auensis (strain DSM 9187 / NBRC 110442 / TA 4) protein is Large ribosomal subunit protein bL9.